The sequence spans 419 residues: MAERLGILVGGGPAPGINSVISSVTIEAINNGLEVIGIYDGFKHLVEGKTNMVKKLSIEDVSRIHIEGGSILRTSRVNPAKSEETLEKTVQTLKKLGIKYLVTIGGDDTAFSASKVCERSKGEIKVVHVPKTIDNDLPLPENMPTFGFETARHVATELVYNLMQDSRTTNRWYFVAMMGREAGHLALGVGKAASATITIIPEEFKEGVTLEEVCDVLDGAILKRKLMGRDDGVAVIGEGIAEKMDPEELANIPGVIVEKDPHGHLRLAEIPLATILKRAIERRYAERGERIHIVDVTIGYELRSARPIPFDIVYTRTLGYGAVRFLLGDYSDLPGGMVCVVGGRIKILPFDAFMDPKTGRTKVRVVDVRSEDYRVARKYMIRLEKKDLEDPETLEKLAKLAKMEPEEFKKKYWHTTELP.

Glycine 12 provides a ligand contact to diphosphate. Residue aspartate 107 coordinates Mg(2+). Substrate-binding positions include threonine 132 to aspartate 134, methionine 178 to arginine 180, glutamate 238, and tyrosine 300 to arginine 303. The active-site Proton acceptor is the aspartate 134.

Belongs to the phosphofructokinase type A (PFKA) family. PPi-dependent PFK group II subfamily. Clade 'Short' sub-subfamily. Homodimer. Requires Mg(2+) as cofactor. Co(2+) serves as cofactor. It depends on Mn(2+) as a cofactor. Ni(2+) is required as a cofactor.

The protein localises to the cytoplasm. It carries out the reaction beta-D-fructose 6-phosphate + diphosphate = beta-D-fructose 1,6-bisphosphate + phosphate + H(+). Its pathway is carbohydrate degradation; glycolysis; D-glyceraldehyde 3-phosphate and glycerone phosphate from D-glucose: step 3/4. With respect to regulation, non-allosteric. In terms of biological role, catalyzes the phosphorylation of D-fructose 6-phosphate, the first committing step of glycolysis. Uses inorganic phosphate (PPi) as phosphoryl donor instead of ATP like common ATP-dependent phosphofructokinases (ATP-PFKs), which renders the reaction reversible, and can thus function both in glycolysis and gluconeogenesis. Consistently, PPi-PFK can replace the enzymes of both the forward (ATP-PFK) and reverse (fructose-bisphosphatase (FBPase)) reactions. The sequence is that of Pyrophosphate--fructose 6-phosphate 1-phosphotransferase from Thermotoga maritima (strain ATCC 43589 / DSM 3109 / JCM 10099 / NBRC 100826 / MSB8).